The following is a 138-amino-acid chain: MTQMTVQVVTPDGIKYDHHAKFISVTTPDGEMGILPNHINVIAPLQVHEMKIRRVSEDDRVDWVAINGGIIEIKDNVVTIVADSAERDRDIDVSRAERAKLRAERDIAEAETTHDIDEVRRAKVALRRALNRINVSKK.

Belongs to the ATPase epsilon chain family. As to quaternary structure, F-type ATPases have 2 components, CF(1) - the catalytic core - and CF(0) - the membrane proton channel. CF(1) has five subunits: alpha(3), beta(3), gamma(1), delta(1), epsilon(1). CF(0) has three main subunits: a, b and c.

The protein localises to the cell membrane. Functionally, produces ATP from ADP in the presence of a proton gradient across the membrane. The protein is ATP synthase epsilon chain of Streptococcus equi subsp. equi (strain 4047).